The chain runs to 311 residues: GTP cyclohydrolase MptA (311 aa).

The protein belongs to the GTP cyclohydrolase IV family. As to quaternary structure, homodimer. Fe(2+) is required as a cofactor.

The enzyme catalyses GTP + H2O = 7,8-dihydroneopterin 2',3'-cyclic phosphate + formate + diphosphate + H(+). The protein operates within cofactor biosynthesis; 5,6,7,8-tetrahydromethanopterin biosynthesis. Its function is as follows. Converts GTP to 7,8-dihydro-D-neopterin 2',3'-cyclic phosphate, the first intermediate in the biosynthesis of coenzyme methanopterin. This Halobacterium salinarum (strain ATCC 29341 / DSM 671 / R1) protein is GTP cyclohydrolase MptA.